Consider the following 758-residue polypeptide: Calpain (758 aa).

The region spanning 99–397 is the Calpain catalytic domain; it reads LWEDPDFPAN…FSRVEVCHLG (299 aa). Active-site residues include cysteine 154, histidine 313, and asparagine 337. Residues 398–562 are domain III; the sequence is LESLEYNQNF…TSITEQELDE (165 aa). The interval 563 to 582 is linker; that stretch reads DNTNQGLPDDVIEALKLEDT. A domain IV region spans residues 583–757; sequence LLDEDQEIEQ…AEDYLRFSVY (175 aa). Aspartate 641, asparagine 643, threonine 645, histidine 647, glutamate 652, aspartate 671, aspartate 673, serine 675, tyrosine 677, and glutamate 682 together coordinate Ca(2+). EF-hand domains are found at residues 658–693 and 694–729; these read IQAK…AGYH and VSNR…LKTA.

This sequence belongs to the peptidase C2 family.

Activated by free cytoplasmic calcium. Calpains are calcium-activated non-lysosomal thiol-proteases. This is Calpain from Schistosoma mansoni (Blood fluke).